The chain runs to 108 residues: ATP-dependent Clp protease adapter protein ClpS (108 aa).

The protein belongs to the ClpS family. In terms of assembly, binds to the N-terminal domain of the chaperone ClpA.

In terms of biological role, involved in the modulation of the specificity of the ClpAP-mediated ATP-dependent protein degradation. The chain is ATP-dependent Clp protease adapter protein ClpS from Ralstonia nicotianae (strain ATCC BAA-1114 / GMI1000) (Ralstonia solanacearum).